The primary structure comprises 131 residues: Large ribosomal subunit protein bL17 (131 aa).

The protein belongs to the bacterial ribosomal protein bL17 family. Part of the 50S ribosomal subunit. Contacts protein L32.

This is Large ribosomal subunit protein bL17 from Thermotoga sp. (strain RQ2).